Here is a 483-residue protein sequence, read N- to C-terminus: Glutamyl-tRNA(Gln) amidotransferase subunit A (483 aa).

Catalysis depends on charge relay system residues K76 and S151. S175 (acyl-ester intermediate) is an active-site residue.

It belongs to the amidase family. GatA subfamily. Heterotrimer of A, B and C subunits.

It carries out the reaction L-glutamyl-tRNA(Gln) + L-glutamine + ATP + H2O = L-glutaminyl-tRNA(Gln) + L-glutamate + ADP + phosphate + H(+). Allows the formation of correctly charged Gln-tRNA(Gln) through the transamidation of misacylated Glu-tRNA(Gln) in organisms which lack glutaminyl-tRNA synthetase. The reaction takes place in the presence of glutamine and ATP through an activated gamma-phospho-Glu-tRNA(Gln). This is Glutamyl-tRNA(Gln) amidotransferase subunit A from Pseudomonas putida (strain W619).